Consider the following 646-residue polypeptide: Acetyl-coenzyme A synthetase (646 aa).

Residues 189–192 (RGPK), threonine 307, and asparagine 331 contribute to the CoA site. ATP is bound by residues 383–385 (GEP), 407–412 (DTWWQT), aspartate 496, and arginine 511. Serine 519 lines the CoA pocket. Arginine 522 is an ATP binding site. 3 residues coordinate Mg(2+): valine 533, histidine 535, and valine 538. Residue arginine 580 participates in CoA binding. At lysine 605 the chain carries N6-acetyllysine.

This sequence belongs to the ATP-dependent AMP-binding enzyme family. Mg(2+) is required as a cofactor. Acetylated. Deacetylation by the SIR2-homolog deacetylase activates the enzyme.

It catalyses the reaction acetate + ATP + CoA = acetyl-CoA + AMP + diphosphate. Its function is as follows. Catalyzes the conversion of acetate into acetyl-CoA (AcCoA), an essential intermediate at the junction of anabolic and catabolic pathways. AcsA undergoes a two-step reaction. In the first half reaction, AcsA combines acetate with ATP to form acetyl-adenylate (AcAMP) intermediate. In the second half reaction, it can then transfer the acetyl group from AcAMP to the sulfhydryl group of CoA, forming the product AcCoA. The protein is Acetyl-coenzyme A synthetase of Desulfatibacillum aliphaticivorans.